Consider the following 621-residue polypeptide: Complex I assembly factor ACAD9, mitochondrial (621 aa).

The N-terminal 37 residues, 1 to 37 (MSGCGLFLRTTAAARACRGLVVSTANRRLLRTSPPVR), are a transit peptide targeting the mitochondrion. Lys41 is modified (N6-acetyllysine). An N6-succinyllysine modification is found at Lys92. The active-site Proton acceptor is Glu426. Residue Thr478 is modified to Phosphothreonine. At Lys521 the chain carries N6-acetyllysine; alternate. Position 521 is an N6-succinyllysine; alternate (Lys521).

The protein belongs to the acyl-CoA dehydrogenase family. As to quaternary structure, homodimer. Interacts with NDUFAF1 and ECSIT. Part of the mitochondrial complex I assembly/MCIA complex that comprises at least the core subunits TMEM126B, NDUFAF1, ECSIT and ACAD9 and complement subunits such as COA1 and TMEM186. Interacts with TMEM70 and TMEM242. The cofactor is FAD. In terms of tissue distribution, ubiquitously expressed in most normal human tissues and cancer cell lines with high level of expression in heart, skeletal muscles, brain, kidney and liver. In the cerebellum uniquely expressed in the granular layer (at protein level).

It localises to the mitochondrion inner membrane. The catalysed reaction is eicosanoyl-CoA + oxidized [electron-transfer flavoprotein] + H(+) = (2E)-eicosenoyl-CoA + reduced [electron-transfer flavoprotein]. It catalyses the reaction octadecanoyl-CoA + oxidized [electron-transfer flavoprotein] + H(+) = (2E)-octadecenoyl-CoA + reduced [electron-transfer flavoprotein]. It carries out the reaction oxidized [electron-transfer flavoprotein] + hexadecanoyl-CoA + H(+) = (2E)-hexadecenoyl-CoA + reduced [electron-transfer flavoprotein]. The enzyme catalyses decanoyl-CoA + oxidized [electron-transfer flavoprotein] + H(+) = (2E)-decenoyl-CoA + reduced [electron-transfer flavoprotein]. The catalysed reaction is nonanoyl-CoA + oxidized [electron-transfer flavoprotein] + H(+) = (2E)-nonenoyl-CoA + reduced [electron-transfer flavoprotein]. It catalyses the reaction pentadecanoyl-CoA + oxidized [electron-transfer flavoprotein] + H(+) = (2E)-pentadecenoyl-CoA + reduced [electron-transfer flavoprotein]. It carries out the reaction undecanoyl-CoA + oxidized [electron-transfer flavoprotein] + H(+) = trans-2-undecenoyl-CoA + reduced [electron-transfer flavoprotein]. The enzyme catalyses (9Z)-hexadecenoyl-CoA + oxidized [electron-transfer flavoprotein] + H(+) = (2E,9Z)-hexadecadienoyl-CoA + reduced [electron-transfer flavoprotein]. The catalysed reaction is heptadecanoyl-CoA + oxidized [electron-transfer flavoprotein] + H(+) = trans-2-heptadecenoyl-CoA + reduced [electron-transfer flavoprotein]. It catalyses the reaction (9E)-octadecenoyl-CoA + oxidized [electron-transfer flavoprotein] + H(+) = (2E,9E)-octadecadienoyl-CoA + reduced [electron-transfer flavoprotein]. It carries out the reaction oxidized [electron-transfer flavoprotein] + (9Z)-octadecenoyl-CoA + H(+) = (2E,9Z)-octadecadienoyl-CoA + reduced [electron-transfer flavoprotein]. The enzyme catalyses (9Z,12Z)-octadecadienoyl-CoA + oxidized [electron-transfer flavoprotein] + H(+) = (2E,9Z,12Z)-octadecatrienoyl-CoA + reduced [electron-transfer flavoprotein]. The catalysed reaction is (4Z,7Z,10Z,13Z,16Z,19Z)-docosahexaenoyl-CoA + oxidized [electron-transfer flavoprotein] + H(+) = (2E,4Z,7Z,10Z,13Z,16Z,19Z)-docosaheptaenoyl-CoA + reduced [electron-transfer flavoprotein]. It catalyses the reaction tetradecanoyl-CoA + oxidized [electron-transfer flavoprotein] + H(+) = (2E)-tetradecenoyl-CoA + reduced [electron-transfer flavoprotein]. Functionally, as part of the MCIA complex, primarily participates in the assembly of the mitochondrial complex I and therefore plays a role in oxidative phosphorylation. This moonlighting protein also has a dehydrogenase activity toward a broad range of substrates with greater specificity for long-chain unsaturated acyl-CoAs. However, in vivo, it does not seem to play a primary role in fatty acid oxidation. In addition, the function in complex I assembly is independent of the dehydrogenase activity of the protein. This is Complex I assembly factor ACAD9, mitochondrial from Homo sapiens (Human).